Here is a 40-residue protein sequence, read N- to C-terminus: Photosystem II reaction center protein J (40 aa).

A helical membrane pass occupies residues 8–28; the sequence is IPLWIIGTVAGILVIGLIGIF.

The protein belongs to the PsbJ family. In terms of assembly, PSII is composed of 1 copy each of membrane proteins PsbA, PsbB, PsbC, PsbD, PsbE, PsbF, PsbH, PsbI, PsbJ, PsbK, PsbL, PsbM, PsbT, PsbX, PsbY, PsbZ, Psb30/Ycf12, at least 3 peripheral proteins of the oxygen-evolving complex and a large number of cofactors. It forms dimeric complexes.

The protein localises to the plastid. Its subcellular location is the chloroplast thylakoid membrane. Functionally, one of the components of the core complex of photosystem II (PSII). PSII is a light-driven water:plastoquinone oxidoreductase that uses light energy to abstract electrons from H(2)O, generating O(2) and a proton gradient subsequently used for ATP formation. It consists of a core antenna complex that captures photons, and an electron transfer chain that converts photonic excitation into a charge separation. This chain is Photosystem II reaction center protein J, found in Nicotiana sylvestris (Wood tobacco).